Consider the following 338-residue polypeptide: Probable 1-aminocyclopropane-1-carboxylate deaminase (338 aa).

Residue Lys51 is modified to N6-(pyridoxal phosphate)lysine. The active-site Nucleophile is the Ser78.

It belongs to the ACC deaminase/D-cysteine desulfhydrase family. The cofactor is pyridoxal 5'-phosphate.

It catalyses the reaction 1-aminocyclopropane-1-carboxylate + H2O = 2-oxobutanoate + NH4(+). Catalyzes a cyclopropane ring-opening reaction, the irreversible conversion of 1-aminocyclopropane-1-carboxylate (ACC) to ammonia and alpha-ketobutyrate. In Schizosaccharomyces pombe (strain 972 / ATCC 24843) (Fission yeast), this protein is Probable 1-aminocyclopropane-1-carboxylate deaminase.